We begin with the raw amino-acid sequence, 374 residues long: Phospho-2-dehydro-3-deoxyheptonate aldolase AMT16 (374 aa).

It belongs to the class-I DAHP synthase family.

It carries out the reaction D-erythrose 4-phosphate + phosphoenolpyruvate + H2O = 7-phospho-2-dehydro-3-deoxy-D-arabino-heptonate + phosphate. The protein operates within mycotoxin biosynthesis. Its function is as follows. Nonribosomal peptide synthetase; part of the gene clusters that mediate the biosynthesis of AM-toxins, host-selective toxins (HSTs) causing Alternaria blotch on apple, a worldwide distributed disease. AM-toxins are cyclic depsipeptides containing the 3 residues 2-hydroxy-isovaleric acid (2-HIV), dehydroalanine, L-alanine which are common for all 3 AM-toxins I to III. The fourth precursor is L-alpha-amino-methoxyphenyl-valeric acid (L-Amv) for AM-toxin I, L-alpha-amino-phenyl-valeric acid (L-Apv) for AM-toxin II, and L-alpha-amino-hydroxyphenyl-valeric acid (L-Ahv) for AM-toxin III. AM-toxins have two target sites for affecting susceptible apple cells; they cause invagination of the plasma membrane and electrolyte loss and chloroplast disorganization. The non-ribosomal peptide synthetase AMT1 contains 4 catalytic modules and is responsible for activation of each residue in AM-toxin. The aldo-keto reductase AMT2 catalyzes the conversion of 2-keto-isovaleric acid (2-KIV) to 2-hydroxy-isovaleric acid (2-HIV), one of the precursor residues incorporated by AMT1 during AM-toxin biosynthesis, by reduction of its ketone to an alcohol. The cytochrome P450 monooxygenase AMT3 and the thioesterase AMT4 are also important for AM-toxin production, but their exact function within the AM-toxin biosynthesis are not known yet. Up to 21 proteins (including AMT1 to AMT4) are predicted to be involved in AM-toxin biosynthesis since their expression ishighly up-regulated in AM-toxin-producing cultures. The chain is Phospho-2-dehydro-3-deoxyheptonate aldolase AMT16 from Alternaria alternata (Alternaria rot fungus).